Reading from the N-terminus, the 500-residue chain is UPF0371 protein SZO_06760 (500 aa).

Belongs to the UPF0371 family.

This Streptococcus equi subsp. zooepidemicus (strain H70) protein is UPF0371 protein SZO_06760.